The chain runs to 113 residues: MSQDIYDYANKLERAVRALPEYRKALEAREEIKADEAASQLFDEFVAVQEKLQGLMQTGQLPTETEQADIQALSQKIEANDLLKGYFNAQQALSVYVNDIERIVFAPLKDLAK.

The protein belongs to the UPF0342 family.

In Streptococcus equi subsp. equi (strain 4047), this protein is UPF0342 protein SEQ_0993.